The following is a 636-amino-acid chain: Chaperone protein HtpG (636 aa).

Residues 1-344 (MTMSVETQKE…SNDLSLNVSR (344 aa)) form an a; substrate-binding region. The b stretch occupies residues 345 to 561 (EILQKDPIID…EQDLGMQMRQ (217 aa)). The segment at 562–636 (ILEASGQKVP…LNKLLVELSV (75 aa)) is c.

Belongs to the heat shock protein 90 family. Homodimer.

The protein resides in the cytoplasm. Its function is as follows. Molecular chaperone. Has ATPase activity. This chain is Chaperone protein HtpG, found in Pseudomonas fluorescens (strain SBW25).